A 315-amino-acid polypeptide reads, in one-letter code: Acetyl-coenzyme A carboxylase carboxyl transferase subunit alpha (315 aa).

A CoA carboxyltransferase C-terminal domain is found at glutamate 32 to glutamine 289.

It belongs to the AccA family. As to quaternary structure, acetyl-CoA carboxylase is a heterohexamer composed of biotin carboxyl carrier protein (AccB), biotin carboxylase (AccC) and two subunits each of ACCase subunit alpha (AccA) and ACCase subunit beta (AccD).

The protein localises to the cytoplasm. The catalysed reaction is N(6)-carboxybiotinyl-L-lysyl-[protein] + acetyl-CoA = N(6)-biotinyl-L-lysyl-[protein] + malonyl-CoA. The protein operates within lipid metabolism; malonyl-CoA biosynthesis; malonyl-CoA from acetyl-CoA: step 1/1. In terms of biological role, component of the acetyl coenzyme A carboxylase (ACC) complex. First, biotin carboxylase catalyzes the carboxylation of biotin on its carrier protein (BCCP) and then the CO(2) group is transferred by the carboxyltransferase to acetyl-CoA to form malonyl-CoA. The polypeptide is Acetyl-coenzyme A carboxylase carboxyl transferase subunit alpha (Staphylococcus haemolyticus (strain JCSC1435)).